Here is a 781-residue protein sequence, read N- to C-terminus: Cytosolic phospholipase A2 beta (781 aa).

Residues 1-112 enclose the C2 domain; sequence MAVAEVSRTC…RAGEFRRESF (112 aa). Residues aspartate 26, aspartate 32, aspartate 82, aspartate 84, and aspartate 90 each coordinate Ca(2+). The region spanning 246–781 is the PLA2c domain; the sequence is EAGLRELAVR…VQRRRQRRPH (536 aa). Catalysis depends on serine 335, which acts as the Nucleophile. Residue aspartate 615 is the Proton acceptor of the active site.

Ca(2+) serves as cofactor. As to expression, widely expressed. Expressed at higher level in brain, heart, liver, cerebellum and pancreas.

The protein localises to the cytoplasm. Its subcellular location is the cytosol. It localises to the mitochondrion membrane. The protein resides in the early endosome membrane. The catalysed reaction is a 1,2-diacyl-sn-glycero-3-phosphocholine + H2O = a 1-acyl-sn-glycero-3-phosphocholine + a fatty acid + H(+). It carries out the reaction a 1-acyl-sn-glycero-3-phosphocholine + H2O = sn-glycerol 3-phosphocholine + a fatty acid + H(+). The enzyme catalyses 1-hexadecanoyl-2-(9Z,12Z-octadecadienoyl)-sn-glycero-3-phosphoethanolamine + H2O = 1-hexadecanoyl-sn-glycero-3-phosphoethanolamine + (9Z,12Z)-octadecadienoate + H(+). It catalyses the reaction 1-hexadecanoyl-2-(5Z,8Z,11Z,14Z-eicosatetraenoyl)-sn-glycero-3-phosphoethanolamine + H2O = 1-hexadecanoyl-sn-glycero-3-phosphoethanolamine + (5Z,8Z,11Z,14Z)-eicosatetraenoate + H(+). The catalysed reaction is 1-hexadecanoyl-sn-glycero-3-phosphocholine + H2O = sn-glycerol 3-phosphocholine + hexadecanoate + H(+). It carries out the reaction 1-hexadecanoyl-2-(5Z,8Z,11Z,14Z-eicosatetraenoyl)-sn-glycero-3-phosphocholine + H2O = 1-hexadecanoyl-sn-glycero-3-phosphocholine + (5Z,8Z,11Z,14Z)-eicosatetraenoate + H(+). The enzyme catalyses 1-hexadecanoyl-2-(5Z,8Z,11Z,14Z-eicosatetraenoyl)-sn-glycero-3-phosphocholine + H2O = 2-(5Z,8Z,11Z,14Z)-eicosatetraenoyl-sn-glycero-3-phosphocholine + hexadecanoate + H(+). With respect to regulation, stimulated by cytosolic Ca(2+). In terms of biological role, calcium-dependent phospholipase A1 and A2 and lysophospholipase that may play a role in membrane phospholipid remodeling. Calcium-dependent phospholipase A2 and lysophospholipase. Cleaves the ester bond of the fatty acyl group attached to the sn-2 position of phosphatidylethanolamines, producing lysophospholipids that may be used in deacylation-reacylation cycles. Hydrolyzes lysophosphatidylcholines with low efficiency but is inefficient toward phosphatidylcholines. Its function is as follows. Calcium-dependent phospholipase A1 and A2 and lysophospholipase. Cleaves the ester bond of the fatty acyl group attached to the sn-1 or sn-2 position of diacyl phospholipids (phospholipase A1 and A2 activity, respectively), producing lysophospholipids that may be used in deacylation-reacylation cycles. Can further hydrolyze lysophospholipids enabling complete deacylation. Has no activity toward alkylacyl phospholipids. The chain is Cytosolic phospholipase A2 beta (PLA2G4B) from Homo sapiens (Human).